The primary structure comprises 311 residues: Transcriptional regulatory protein MoaR1 (311 aa).

A DNA-binding region (ompR/PhoB-type) is located at residues 15 to 117 (LNATTAGAVQ…SEPPGYRLLI (103 aa)).

Belongs to the AfsR/DnrI/RedD regulatory family.

Its function is as follows. Acts as a positive transcriptional regulator of the molybdopterin biosynthesis moa1 locus, promoting the expression of the moaA1B1C1D1 genes. Binds directly to the moaA1 promoter. This is Transcriptional regulatory protein MoaR1 (moaR1) from Mycobacterium tuberculosis (strain ATCC 25618 / H37Rv).